Reading from the N-terminus, the 87-residue chain is Down syndrome critical region protein 10 (87 aa).

In Pan troglodytes (Chimpanzee), this protein is Down syndrome critical region protein 10 (DSCR10).